Reading from the N-terminus, the 118-residue chain is Histone H4 (118 aa).

A disordered region spans residues M1–Q39. Over residues S7–S22 the composition is skewed to gly residues.

Belongs to the histone H4 family. The nucleosome is a histone octamer containing two molecules each of H2A, H2B, H3 and H4 assembled in one H3-H4 heterotetramer and two H2A-H2B heterodimers. The octamer wraps approximately 147 bp of DNA.

It is found in the nucleus. The protein resides in the chromosome. Functionally, core component of nucleosome. Nucleosomes wrap and compact DNA into chromatin, limiting DNA accessibility to the cellular machineries which require DNA as a template. Histones thereby play a central role in transcription regulation, DNA repair, DNA replication and chromosomal stability. DNA accessibility is regulated via a complex set of post-translational modifications of histones, also called histone code, and nucleosome remodeling. The chain is Histone H4 from Entamoeba histolytica (strain ATCC 30459 / HM-1:IMSS / ABRM).